Here is a 504-residue protein sequence, read N- to C-terminus: Maturase K (504 aa).

This sequence belongs to the intron maturase 2 family. MatK subfamily.

The protein localises to the plastid. Its subcellular location is the chloroplast. In terms of biological role, usually encoded in the trnK tRNA gene intron. Probably assists in splicing its own and other chloroplast group II introns. The polypeptide is Maturase K (Impatiens capensis (Spotted jewelweed)).